Reading from the N-terminus, the 75-residue chain is CDC42 small effector protein 2-C (75 aa).

Residues C10 and C11 are each lipidated (S-palmitoyl cysteine). Positions 29–42 (IGEPMNFVHTAHVG) constitute a CRIB domain.

The protein belongs to the CDC42SE/SPEC family.

Its subcellular location is the cytoplasm. It localises to the cytoskeleton. The protein resides in the cell membrane. Probably involved in the organization of the actin cytoskeleton by acting downstream of CDC42, inducing actin filament assembly. This is CDC42 small effector protein 2-C (cdc42se2-c) from Xenopus laevis (African clawed frog).